The primary structure comprises 552 residues: Sensor histidine kinase DpiB (552 aa).

The Cytoplasmic segment spans residues 1–21; it reads MLQLNENKQFAFFQRLAFPLR. The chain crosses the membrane as a helical span at residues 22–42; that stretch reads IFLLILVFSIFVIAALAQYFT. Residues 43-182 are Periplasmic-facing; it reads ASFEDYLTLH…DSWRAEFLLP (140 aa). Residues 183 to 203 form a helical membrane-spanning segment; sequence MAGVFVVLLGILMLLSWFLAA. At 204–552 the chain is on the cytoplasmic side; sequence HIRRQMMGME…NDSSINPIDR (349 aa). The PAS domain maps to 222-292; the sequence is RQQEALFSSV…IDEKRQDVVA (71 aa). In terms of domain architecture, Histidine kinase spans 344 to 541; it reads TLRHEHLNWM…LFSIYIPKVK (198 aa). The residue at position 347 (H347) is a Phosphohistidine; by autocatalysis.

Post-translationally, autophosphorylated.

The protein resides in the cell inner membrane. The catalysed reaction is ATP + protein L-histidine = ADP + protein N-phospho-L-histidine.. Autophosphorylation is induced in vitro by dithiothreitol (DTT). Its function is as follows. Member of the two-component regulatory system DpiA/DpiB, which is essential for expression of citrate-specific fermentation genes and genes involved in plasmid inheritance. Could be involved in response to both the presence of citrate and external redox conditions. Functions as a sensor kinase that phosphorylates DpiA in the presence of citrate. The polypeptide is Sensor histidine kinase DpiB (dpiB) (Escherichia coli (strain K12)).